The sequence spans 151 residues: Acidic phospholipase A2 3 (151 aa).

The N-terminal stretch at 1–27 (MYPAHLLVLLAVCVSLLGAASIPARPL) is a signal peptide. 7 disulfide bridges follow: C38–C104, C54–C151, C56–C72, C71–C132, C78–C125, C88–C118, and C111–C123. Positions 55, 57, and 59 each coordinate Ca(2+). H75 is an active-site residue. D76 provides a ligand contact to Ca(2+). D126 is a catalytic residue.

Belongs to the phospholipase A2 family. Group I subfamily. D49 sub-subfamily. Ca(2+) serves as cofactor. Expressed by the venom gland.

The protein resides in the secreted. The enzyme catalyses a 1,2-diacyl-sn-glycero-3-phosphocholine + H2O = a 1-acyl-sn-glycero-3-phosphocholine + a fatty acid + H(+). Functionally, PLA2 catalyzes the calcium-dependent hydrolysis of the 2-acyl groups in 3-sn-phosphoglycerides. The sequence is that of Acidic phospholipase A2 3 from Tropidechis carinatus (Australian rough-scaled snake).